The chain runs to 169 residues: Major pepsin inhibitor 3 (169 aa).

The N-terminal stretch at 1 to 20 (MHVWLILSLASLWTSSIAYS) is a signal peptide. A Pyrrolidone carboxylic acid modification is found at Gln21. 3 disulfides stabilise this stretch: Cys33-Cys79, Cys68-Cys86, and Cys99-Cys166. Residues 135–169 (EEQQENQPPSSGMPHGAVPAGGLSPPPPPSFCTVQ) form a disordered region. Pro residues predominate over residues 158–169 (SPPPPPSFCTVQ).

Belongs to the protease inhibitor I33 family. As to expression, body wall.

It localises to the secreted. Functionally, this is an inhibitor of the aspartic protease pepsin. This is Major pepsin inhibitor 3 from Ascaris suum (Pig roundworm).